Consider the following 65-residue polypeptide: Large ribosomal subunit protein bL35 (65 aa).

The protein belongs to the bacterial ribosomal protein bL35 family.

The polypeptide is Large ribosomal subunit protein bL35 (Syntrophobacter fumaroxidans (strain DSM 10017 / MPOB)).